The primary structure comprises 425 residues: MLDLKRIRNNPEEIKKLLSNRGEDFDVAVIDEIVTLDEERRKILVEVESLKSKRNQVSAEIPKLKKAGEDVTEIMNDMRKLGEEIKNFDTRVNEINERIEYIMLRIPNIPNPEVPDGETDEDNVEIKKWGEPTKFNFEPKAHWDLGTDLNILDFERGGKVAGSRFTVYKGLGARLERSIINYFLDKHTTENGYTEILPPYMVNRDSMTGTGQLPKFEEDAFKVENNGYFLIPTAEVPVTNMYRNEVLSGDILPIKHAAYSACFRAEAGSAGRDTRGLVRQHQFNKVELVKFCKPEDSYAELDKLVEDAESVLQGLGLPYRIVRICKGDLGFTAALKYDIEVWMPSYNRYVEISSCSNFEDFQARRANIKYRETPKDKPKFIHTLNGSGVAIGRTVAAVLENYQKEDGTVEIPEAIKRFMNVDFIK.

Thr-233–Glu-235 serves as a coordination point for L-serine. An ATP-binding site is contributed by Arg-264 to Glu-266. Glu-287 is a binding site for L-serine. Position 351–354 (Glu-351–Ser-354) interacts with ATP. L-serine is bound at residue Ser-387.

This sequence belongs to the class-II aminoacyl-tRNA synthetase family. Type-1 seryl-tRNA synthetase subfamily. In terms of assembly, homodimer. The tRNA molecule binds across the dimer.

Its subcellular location is the cytoplasm. It catalyses the reaction tRNA(Ser) + L-serine + ATP = L-seryl-tRNA(Ser) + AMP + diphosphate + H(+). It carries out the reaction tRNA(Sec) + L-serine + ATP = L-seryl-tRNA(Sec) + AMP + diphosphate + H(+). The protein operates within aminoacyl-tRNA biosynthesis; selenocysteinyl-tRNA(Sec) biosynthesis; L-seryl-tRNA(Sec) from L-serine and tRNA(Sec): step 1/1. Functionally, catalyzes the attachment of serine to tRNA(Ser). Is also able to aminoacylate tRNA(Sec) with serine, to form the misacylated tRNA L-seryl-tRNA(Sec), which will be further converted into selenocysteinyl-tRNA(Sec). This chain is Serine--tRNA ligase, found in Clostridium botulinum (strain Eklund 17B / Type B).